The primary structure comprises 124 residues: UPF0102 protein Noc_0355 (124 aa).

It belongs to the UPF0102 family.

This is UPF0102 protein Noc_0355 from Nitrosococcus oceani (strain ATCC 19707 / BCRC 17464 / JCM 30415 / NCIMB 11848 / C-107).